Reading from the N-terminus, the 217-residue chain is uncharacterized protein (217 aa).

7 helical membrane-spanning segments follow: residues 4-23, 44-66, 76-98, 111-128, 132-154, 166-188, and 198-215; these read IYGI…GKET, NVVI…LTWV, TVET…SIII, FLYL…IHAI, MAMV…PLAL, AGTA…IVLF, and LLLS…ALQL.

The protein resides in the cell membrane. This is an uncharacterized protein from Archaeoglobus fulgidus (strain ATCC 49558 / DSM 4304 / JCM 9628 / NBRC 100126 / VC-16).